The following is a 511-amino-acid chain: Cobyric acid synthase (511 aa).

The GATase cobBQ-type domain maps to 251 to 443 (LLDIAIICLP…IHGIFDNDVF (193 aa)). The Nucleophile role is filled by cysteine 332. Histidine 435 is a catalytic residue.

Belongs to the CobB/CobQ family. CobQ subfamily.

It participates in cofactor biosynthesis; adenosylcobalamin biosynthesis. In terms of biological role, catalyzes amidations at positions B, D, E, and G on adenosylcobyrinic A,C-diamide. NH(2) groups are provided by glutamine, and one molecule of ATP is hydrogenolyzed for each amidation. This chain is Cobyric acid synthase, found in Listeria monocytogenes serotype 4b (strain F2365).